A 289-amino-acid polypeptide reads, in one-letter code: Doxorubicin resistance ABC transporter permease protein DrrB (289 aa).

The ABC transmembrane type-2 domain occupies 47 to 282 (GEVLTTVGAP…FVVILALSST (236 aa)). Transmembrane regions (helical) follow at residues 49–69 (VLTT…PFAI), 88–108 (QYIT…GSGF), 138–158 (WVAV…GYVI), 166–186 (ALYI…LSFA), 199–219 (AMLP…IGLM), and 266–286 (TLTW…IVLA).

It belongs to the ABC-2 integral membrane protein family. The complex is composed of two ATP-binding proteins (DrrA) and two transmembrane proteins (DrrB and DrrC).

It localises to the cell membrane. Its function is as follows. Part of the ABC transporter complex DrrABC involved in doxorubicin resistance. Probably responsible for the translocation of the substrate across the membrane. The polypeptide is Doxorubicin resistance ABC transporter permease protein DrrB (drrB) (Mycobacterium tuberculosis (strain CDC 1551 / Oshkosh)).